Consider the following 696-residue polypeptide: Chitin synthase regulator SKT5 (696 aa).

Disordered stretches follow at residues 37-67 (GQDF…SANQ) and 90-145 (QEED…IKKR). Over residues 41–53 (SDNKENRENRDNE) the composition is skewed to basic and acidic residues. A compositionally biased stretch (low complexity) spans 104–126 (LNNSNNTSLSSLGSTPTNSPSPG). Over residues 129–139 (RQTNSSTSLTK) the composition is skewed to polar residues. The residue at position 148 (serine 148) is a Phosphoserine. 7 Sel1-like repeats span residues 271–306 (SDAQ…KHGH), 307–342 (IESA…SRNH), 343–382 (PSAM…ARAN), 386–423 (AAAP…SLGH), 424–460 (VPSA…LKGD), 461–498 (SVAM…NAGL), and 499–534 (PKAQ…GNED). Serine 561 and serine 563 each carry phosphoserine. Phosphothreonine is present on threonine 564. Polar residues-rich tracts occupy residues 576–593 (SNVG…TFFT), 605–634 (LQIN…SSAK), and 651–661 (VSLSNMGSSNM). Positions 576-696 (SNVGSNSRVS…GKKKKDCVIM (121 aa)) are disordered. Basic and acidic residues predominate over residues 662 to 675 (IRKDFPAVKTESKK). A compositionally biased stretch (basic residues) spans 680–696 (KNKKDKQGKKKKDCVIM). Cysteine 693 carries the post-translational modification Cysteine methyl ester. Cysteine 693 carries S-farnesyl cysteine lipidation. A propeptide spans 694–696 (VIM) (removed in mature form).

The protein belongs to the SKT5 family. In terms of assembly, may interact with CHS3 and seems to be an adapter (along with BNI4) to link CHS3 to septins. In terms of processing, farnesylation is required for chitin synthase CHS3 activity but is not required for SKT5 membrane association.

The protein localises to the cell membrane. Functionally, activator of the chitin synthase CHS3 which polymerizes chitin, a structural polymer of the fungal cell wall. This chain is Chitin synthase regulator SKT5, found in Saccharomyces cerevisiae (strain ATCC 204508 / S288c) (Baker's yeast).